A 292-amino-acid polypeptide reads, in one-letter code: Transmembrane and ubiquitin-like domain-containing protein 1 (292 aa).

Residues 11-31 form a helical membrane-spanning segment; sequence VTLLFGVVFLVLVLVLAWAST. The disordered stretch occupies residues 34 to 143; sequence VEPPEHLLSP…TQPSAEDAAS (110 aa). Over residues 71 to 80 the composition is skewed to basic and acidic residues; sequence VRDEDDKSEP. Over residues 84–94 the composition is skewed to low complexity; sequence AGAAGQSADGS. Residues 149–222 enclose the Ubiquitin-like domain; that stretch reads MVLRLKFLND…LHCHISQHAT (74 aa). 2 helical membrane passes run 237–257 and 269–289; these read VALNVGSLMVPLFVLMLSVLW and APATASLVGITIFFSFVAFGV.

It is found in the membrane. The protein localises to the cytoplasm. It localises to the nucleus. May contribute to the regulation of translation during cell-cycle progression. May contribute to the regulation of cell proliferation. The membrane form is involved in sterol-regulated ubiquitination and degradation of HMG-CoA reductase HMGCR. May be involved in centrosome assembly. This chain is Transmembrane and ubiquitin-like domain-containing protein 1 (tmub1), found in Danio rerio (Zebrafish).